A 418-amino-acid chain; its full sequence is Aspartate aminotransferase 1 (418 aa).

Lys264 bears the N6-(pyridoxal phosphate)lysine mark.

It belongs to the class-I pyridoxal-phosphate-dependent aminotransferase family. In terms of assembly, homodimer. Pyridoxal 5'-phosphate serves as cofactor. Nodules, roots, stems and leaves, in decreasing order of aspartate aminotransferase 1 concentration. Is the predominant aspartate aminotransferase isoenzyme in roots.

It localises to the cytoplasm. It carries out the reaction L-aspartate + 2-oxoglutarate = oxaloacetate + L-glutamate. Its function is as follows. Important for the metabolism of amino acids and Krebs-cycle related organic acids. In plants, it is involved in nitrogen metabolism and in aspects of carbon and energy metabolism. This Medicago sativa (Alfalfa) protein is Aspartate aminotransferase 1 (AAT-1).